We begin with the raw amino-acid sequence, 219 residues long: MDADFWLDRWREGRTHFHQTRVTPLLQKYWPALDVPAGGQVLVPLAGKSLDMVWLAGQGLRVLGVELSQLAVEQFFDENGLRPEIHQSAQGRHYVAGNLELICGDVFALEDATLAACAGVYDRAALVALPEPMRKRYAREVYGRLGRGCRGILITLDYPQDQMEGPPFSVDDAEVQALYAGHTEARLIDRRDILDKEPKFNQRGVARLDTLVYRLERLG.

S-adenosyl-L-methionine contacts are provided by Trp10, Leu45, Glu66, and Arg123.

The protein belongs to the class I-like SAM-binding methyltransferase superfamily. TPMT family.

Its subcellular location is the cytoplasm. It catalyses the reaction S-adenosyl-L-methionine + a thiopurine = S-adenosyl-L-homocysteine + a thiopurine S-methylether.. This is Thiopurine S-methyltransferase from Bordetella bronchiseptica (strain ATCC BAA-588 / NCTC 13252 / RB50) (Alcaligenes bronchisepticus).